The following is a 263-amino-acid chain: 7beta-hydroxysteroid dehydrogenase (263 aa).

Residues 17-21, 40-41, and 66-67 contribute to the NADP(+) site; these read TEGVG, RR, and DF. Catalysis depends on tyrosine 156, which acts as the Proton acceptor. Serine 240 is a binding site for NADP(+).

Belongs to the short-chain dehydrogenases/reductases (SDR) family. In terms of assembly, homodimer.

It carries out the reaction a 7beta-hydroxysteroid + NADP(+) = a 7-oxosteroid + NADPH + H(+). The catalysed reaction is 7-oxolithocholate + NADPH + H(+) = ursodeoxycholate + NADP(+). The enzyme catalyses 7beta-hydroxy-3,12-dioxo-5beta-cholan-24-oate + NADP(+) = dehydrocholate + NADPH + H(+). It catalyses the reaction ursocholate + NADP(+) = 3alpha,12alpha-dihydroxy-7-oxo-5beta-cholanate + NADPH + H(+). Its function is as follows. 7beta-hydroxysteroid dehydrogenase that catalyzes the reduction of the 7-oxo group of 7-oxo-lithocholate (7-oxo-LCA), to yield ursodeoxycholate (UDCA). As C.aerofaciens is an intestinal bacterium, this enzyme probably contributes to the formation of UDCA in the human colon. UDCA is regarded as a chemopreventive beneficial secondary bile acid due to its low hydrophobicity; it protects hepatocytes and bile duct epithelial cells against necrosis and apoptosis induced by more hydrophobic secondary bile acids like deoxycholate (DCA). This enzyme is also able to catalyze the reverse reaction, i.e. the oxidation of the 7beta-hydroxy group of UDCA to 7-oxo-LCA. To a lesser extent, is also active on the taurine- and glycine-conjugates of ursodeoxycholate. It is specific for NADPH/NADP(+) as the electron acceptor/donor since it is not active with NADH/NAD(+). In the presence of NADPH, 7beta-HSDH can also reduce dehydrocholate. And is also able to oxidize ursocholate. This Collinsella aerofaciens (strain ATCC 25986 / DSM 3979 / JCM 10188 / KCTC 3647 / NCTC 11838 / VPI 1003) protein is 7beta-hydroxysteroid dehydrogenase.